Here is a 141-residue protein sequence, read N- to C-terminus: Large ribosomal subunit protein uL14m (141 aa).

Residues 1 to 19 (MALSLSGLILPKLMQQRAF) constitute a mitochondrion transit peptide.

It belongs to the universal ribosomal protein uL14 family. As to quaternary structure, component of the mitochondrial ribosome large subunit (39S) which comprises a 16S rRNA and about 50 distinct proteins. Interacts with MALSU1.

The protein resides in the mitochondrion. Its function is as follows. May form part of 2 intersubunit bridges in the assembled ribosome. Upon binding to MALSU1, intersubunit bridge formation is blocked, preventing ribosome formation and repressing translation. The polypeptide is Large ribosomal subunit protein uL14m (mrpl14) (Danio rerio (Zebrafish)).